The chain runs to 218 residues: DNA replication complex GINS protein psf3 (218 aa).

The segment covering 147-163 (GGGSSYHGRDGGGAGGK) has biased composition (gly residues). The interval 147-182 (GGGSSYHGRDGGGAGGKGKGKATKDDNASNLGVGGA) is disordered.

It belongs to the GINS3/PSF3 family. Component of the GINS complex which is a heterotetramer of div-26/sld5, drc-1/psf1, drc-2/psf2 and drc-3/psf3.

The protein localises to the nucleus. Its function is as follows. The GINS complex plays an essential role in the initiation of DNA replication. This Neurospora crassa (strain ATCC 24698 / 74-OR23-1A / CBS 708.71 / DSM 1257 / FGSC 987) protein is DNA replication complex GINS protein psf3 (drc-3).